The sequence spans 396 residues: Phosphoglycerate kinase (396 aa).

Residues 21-23, arginine 36, 59-62, arginine 118, and arginine 151 each bind substrate; these read DFN and HLGR. ATP is bound by residues lysine 201, glycine 292, glutamate 323, and 349-352; that span reads GGDS.

It belongs to the phosphoglycerate kinase family. In terms of assembly, monomer.

It localises to the cytoplasm. The enzyme catalyses (2R)-3-phosphoglycerate + ATP = (2R)-3-phospho-glyceroyl phosphate + ADP. The protein operates within carbohydrate degradation; glycolysis; pyruvate from D-glyceraldehyde 3-phosphate: step 2/5. This Leptospira biflexa serovar Patoc (strain Patoc 1 / Ames) protein is Phosphoglycerate kinase.